We begin with the raw amino-acid sequence, 85 residues long: Alpha-toxin BmalphaTx47 (85 aa).

The N-terminal stretch at 1 to 19 (MNYLIVISFALLLMTGVQS) is a signal peptide. Residues 21–83 (RDAYIADSEN…VPIRISGSCR (63 aa)) form the LCN-type CS-alpha/beta domain. 4 disulfides stabilise this stretch: Cys-31–Cys-82, Cys-35–Cys-55, Cys-41–Cys-65, and Cys-45–Cys-67.

Belongs to the long (4 C-C) scorpion toxin superfamily. Sodium channel inhibitor family. Alpha subfamily. Expressed by the venom gland.

The protein localises to the secreted. Alpha toxins bind voltage-independently at site-3 of sodium channels (Nav) and inhibit the inactivation of the activated channels, thereby blocking neuronal transmission. This toxin expressed with the pET-14b vector has low inhibitory activity on sodium channels (11.33% on rNav1.2/SCN2A, 15.96% on mNav1.4/SCN4A and 5.04% on hNav1.5/SCN5A). When expressed with the pET-28a vector, this toxin has higher inhibitory activities (44.12% on rNav1.2/SCN2A, 25.40% on mNav1.4/SCN4A and 65.34% on hNav1.5/SCN5A). The sequence is that of Alpha-toxin BmalphaTx47 from Olivierus martensii (Manchurian scorpion).